We begin with the raw amino-acid sequence, 424 residues long: MTLNIKNHPCFNDSSRHTYGRIHLPVAPKCNIQCNYCNRKFDCMNENRPGITSKVLSPRQALYYLDNALKLSPNISVVGIAGPGDPFANPEETMETLRLVREKYPEMLLCVATNGLDMLPYIEELAELQVSHVTLTINAIDPEIGQEIYAWVRYQKKMYRDRQAAELLLENQLAALQKLKRYGVTAKVNSIIIPGVNDQHVIEVARQVASMGADILNALPYYNTTETVFENIPEPDPMMVRKIQEEAGKLLPQMKHCARCRADAVGIIGEINSDEMMAKLAEAALMPKNPDEHRPYIAVASLEGVLINQHLGEADRFLVYALDEEKKSCTLVDSRQAPPPGGGKLRWEALAAKLSDCRAVLVNSAGDSPQSVLKASGIDVMSIEGVIEEAVYGVFTGQNLKHLMKSSQIHACKTSCGGDGNGCD.

Positions 12–261 (NDSSRHTYGR…PQMKHCARCR (250 aa)) constitute a Radical SAM core domain. The [4Fe-4S] cluster site is built by cysteine 30, cysteine 34, and cysteine 37. S-adenosyl-L-methionine-binding residues include glycine 84, threonine 136, and valine 188. [4Fe-4S] cluster is bound by residues cysteine 257 and cysteine 260.

Belongs to the radical SAM superfamily. NifB family. Monomer. The cofactor is [4Fe-4S] cluster.

It functions in the pathway cofactor biosynthesis; Fe-Mo cofactor biosynthesis. Functionally, involved in the biosynthesis of the iron-molybdenum cofactor (FeMo-co or M-cluster) found in the dinitrogenase enzyme of the nitrogenase complex in nitrogen-fixing microorganisms. NifB catalyzes the crucial step of radical SAM-dependent carbide insertion that occurs concomitant with the insertion of a 9th sulfur and the rearrangement/coupling of two [4Fe-4S] clusters into a [8Fe-9S-C] cluster, the precursor to the M-cluster. The polypeptide is FeMo cofactor biosynthesis protein NifB (Chlorobaculum tepidum (strain ATCC 49652 / DSM 12025 / NBRC 103806 / TLS) (Chlorobium tepidum)).